The primary structure comprises 261 residues: NADH-ubiquinone oxidoreductase chain 1 (261 aa).

6 consecutive transmembrane segments (helical) span residues 2–22 (LIYSIVLMLVVTLIIASITLL), 69–89 (FFVAMPSLAGAVCYTFWMNSI), 103–123 (IVYASLLSILFGLCVMLTGYF), 138–158 (ILMLNLEIFLGIVFLNVCFLV), 172–192 (IFWLIFLFFFLLSNILLVFLL), and 224–244 (FYLGEYFHLFFFSCLISVVFF).

This sequence belongs to the complex I subunit 1 family.

It is found in the mitochondrion inner membrane. The catalysed reaction is a ubiquinone + NADH + 5 H(+)(in) = a ubiquinol + NAD(+) + 4 H(+)(out). In terms of biological role, core subunit of the mitochondrial membrane respiratory chain NADH dehydrogenase (Complex I) that is believed to belong to the minimal assembly required for catalysis. Complex I functions in the transfer of electrons from NADH to the respiratory chain. The immediate electron acceptor for the enzyme is believed to be ubiquinone. This chain is NADH-ubiquinone oxidoreductase chain 1 (ND1), found in Paramecium tetraurelia.